Consider the following 247-residue polypeptide: Phosphatidylserine decarboxylase proenzyme (247 aa).

The active-site Schiff-base intermediate with substrate; via pyruvic acid is serine 206. Serine 206 is subject to Pyruvic acid (Ser); by autocatalysis.

Belongs to the phosphatidylserine decarboxylase family. PSD-A subfamily. As to quaternary structure, heterodimer of a large membrane-associated beta subunit and a small pyruvoyl-containing alpha subunit. The cofactor is pyruvate. In terms of processing, is synthesized initially as an inactive proenzyme. Formation of the active enzyme involves a self-maturation process in which the active site pyruvoyl group is generated from an internal serine residue via an autocatalytic post-translational modification. Two non-identical subunits are generated from the proenzyme in this reaction, and the pyruvate is formed at the N-terminus of the alpha chain, which is derived from the carboxyl end of the proenzyme. The post-translation cleavage follows an unusual pathway, termed non-hydrolytic serinolysis, in which the side chain hydroxyl group of the serine supplies its oxygen atom to form the C-terminus of the beta chain, while the remainder of the serine residue undergoes an oxidative deamination to produce ammonia and the pyruvoyl prosthetic group on the alpha chain.

It localises to the cell membrane. It carries out the reaction a 1,2-diacyl-sn-glycero-3-phospho-L-serine + H(+) = a 1,2-diacyl-sn-glycero-3-phosphoethanolamine + CO2. The protein operates within phospholipid metabolism; phosphatidylethanolamine biosynthesis; phosphatidylethanolamine from CDP-diacylglycerol: step 2/2. Catalyzes the formation of phosphatidylethanolamine (PtdEtn) from phosphatidylserine (PtdSer). This is Phosphatidylserine decarboxylase proenzyme from Nitrobacter winogradskyi (strain ATCC 25391 / DSM 10237 / CIP 104748 / NCIMB 11846 / Nb-255).